Reading from the N-terminus, the 718-residue chain is MPRKILVTNALPYANGDIHLGHLVGYIQGDIWVRYQRMRGNTVHYVCADDTHGTPVMLRAEKEGITPEALIGRVHGEHLRDFTDFGVAFDNYHSTHSVENRAYAEDVYTKLKAAELIDTRAIEQFYDPVKEMFLPDRFIKGECPKCGAADQYGDNCEACGAAYAPTELKNPHSAVSGAKPVLKTSEHYFFRLSDPRAVAFLREWTRGTNAAGTRRLQVEAANKMKEWLGDETVGDGGNTLSDWDISRDAPYFGFEIPGAPGKYFYVWLDAPIGYFASFRNLAEQRGDIAVDDFTDAVRAETAGTEMVHFIGKDILYFHALFWPAMLRFAGYRTPTQLCVNGFLTVDGAKMSKSRGTFITARSYVSRGLNPEWLRYYFATKSNGTMEDVDLSLDDMVAKVNSDLVGKYVNIASRCAGFIAKRFDGKLGASDPQATADFEAAFAAGTIAHAYEERDYGRALREIMRLADLANQYVNDHKPWELAKQEGQEAHLHVVCSTALTHFRDLTLYLKPVLPALAQKVEAFLAIDPLVWPQTWQPLPAAHTINPYAHLMTRVERKQIDALLEANRESLAPAAPAAKVASSQQRHAEKQQHEAQSAETAMPHISIDDFTKVDLRIARIVGAEHVEGADKLIRLRLDIGESENGQAKLRQVFAGIKSAYDPATLVGRLTVMVANLAPRKMKFGVSEGMVLAASSADDKSSGIYLLSPDTGAASGMRVK.

The 'HIGH' region signature appears at 12–22 (PYANGDIHLGH). Positions 143, 146, 156, and 159 each coordinate Zn(2+). The short motif at 349 to 353 (KMSKS) is the 'KMSKS' region element. K352 provides a ligand contact to ATP. The disordered stretch occupies residues 573–599 (AAPAAKVASSQQRHAEKQQHEAQSAET). In terms of domain architecture, tRNA-binding spans 608–718 (DFTKVDLRIA…TGAASGMRVK (111 aa)).

Belongs to the class-I aminoacyl-tRNA synthetase family. MetG type 1 subfamily. Homodimer. Requires Zn(2+) as cofactor.

Its subcellular location is the cytoplasm. The catalysed reaction is tRNA(Met) + L-methionine + ATP = L-methionyl-tRNA(Met) + AMP + diphosphate. Functionally, is required not only for elongation of protein synthesis but also for the initiation of all mRNA translation through initiator tRNA(fMet) aminoacylation. This Aromatoleum aromaticum (strain DSM 19018 / LMG 30748 / EbN1) (Azoarcus sp. (strain EbN1)) protein is Methionine--tRNA ligase.